The following is a 115-amino-acid chain: uncharacterized protein (115 aa).

3 helical membrane passes run 1 to 21 (MFLAGVLCMCAAAASALFGSW), 33 to 53 (ALALRAMAPTQLAAAVMLAAG), and 54 to 74 (GVVAVAAPGHTALMVVIVCIA).

To M.leprae ML0030.

It is found in the cell membrane. This is an uncharacterized protein from Mycobacterium tuberculosis (strain CDC 1551 / Oshkosh).